The chain runs to 1481 residues: DNA excision repair protein ERCC-6 (1481 aa).

The tract at residues 1 to 506 (MFHEEVPNST…GFLFKKLFKY (506 aa)) is N-terminal domain; essential for its chromatin remodeling activity. Ser-158 is subject to Phosphoserine; by CDK2. Lys-170 carries the N6-methylated lysine; by EHMT2 modification. Lys-256 is covalently cross-linked (Glycyl lysine isopeptide (Lys-Gly) (interchain with G-Cter in SUMO2)). An N6-methylated lysine; by EHMT2 modification is found at Lys-298. A disordered region spans residues 309–452 (AIETKADQRS…RKVARRQDDG (144 aa)). Basic residues predominate over residues 327 to 337 (RLKKHSRKLQR). The span at 353 to 363 (KPLEPEVRPEA) shows a compositional bias: basic and acidic residues. 2 stretches are compositionally biased toward acidic residues: residues 378-390 (DGEE…EEEG) and 420-435 (EIDD…EDEA). Phosphoserine occurs at positions 428 and 429. Lys-444 is modified (N6-methylated lysine; by EHMT2). Residues Ser-482 and Ser-485 each carry the phosphoserine modification. Residues 515 to 691 (WELHCQQAGG…WSLFDFIFPG (177 aa)) enclose the Helicase ATP-binding domain. 528 to 535 (DEMGLGKT) contributes to the ATP binding site. Positions 642–645 (DEGH) match the DEAH box motif. The Helicase C-terminal domain occupies 839–998 (VVESLLKIWH…RRFFKSNDLY (160 aa)). Disordered regions lie at residues 1040–1096 (LGTD…NRAS), 1114–1238 (SVMS…DRSS), and 1307–1372 (GHRG…GAPS). N6-methylated lysine; by EHMT2 is present on Lys-1047. A compositionally biased stretch (polar residues) spans 1138 to 1147 (ASTSEKQGSS). Basic residues predominate over residues 1192–1201 (QPKQKAKNSK). The segment covering 1202 to 1212 (HCRDAKFEGTR) has biased composition (basic and acidic residues). Residues 1330 to 1345 (LPVQHPSSLTEKTQNN) show a composition bias toward polar residues. Residues 1346 to 1364 (MKKEGKAHTPEHFSGKEDG) are compositionally biased toward basic and acidic residues. The CSA-interacting motif (CIM) signature appears at 1373-1385 (SSSLLARMRARNH). Positions 1387–1416 (ILPERLESDSEHLAEAAAVPPCGTEHDDLL) are ubiquitin-binding domain (UBD). The winged-helix domain (WHD) stretch occupies residues 1417–1481 (VDMRNFIAFQ…GIWKLKPEYC (65 aa)). Residues 1434–1481 (STQEILQEFESKLSVAQSCVFRELLRNLCNFHRTPGGEGIWKLKPEYC) form an essential for its interaction with RNA polymerase II, transcription-coupled nucleotide excision repair activity, association with chromatin after UV irradiation and for mediating the UV-induced translocation of ERRC8 to the nuclear matrix region.

Belongs to the SNF2/RAD54 helicase family. As to quaternary structure, homodimer. Binds DNA. Interacts with ERCC8. Interacts with RNA polymerase II; interaction is enhanced by UV irradiation. Component of the B-WICH complex, at least composed of SMARCA5/SNF2H, BAZ1B/WSTF, SF3B1, DEK, MYO1C, ERCC6, MYBBP1A and DDX21. Interacts with KIAA1530/UVSSA. Interacts with ELOA and CUL5; the interaction is induced by DNA damaging agents or by inhibitors of RNA polymerase II elongation. Interacts (via WHD region) with RIF1. Interacts with SMARCC2/BAF170, SMARCB1/BAF47 and the neuron-specific chromatin remodeling complex (nBAF complex). Interacts with ERCC5/XPG (via C-terminus); the interaction stimulates ERCC6/CSB binding to DNA repair bubble and ERCC6/CSB ATPase activity. May form a complex composed of RNA polymerase II, ERCC6/CSB and ERCC5/XPG which associates with the DNA repair bubble during transcription-coupled nucleotide excision repair. Interacts with CAND1, CSTF1, DDX3X, DDX5, DDX17, DDX23, DHX36, HDAC1, HNRNPU, MTA2, PRPF3, PSMD3, RBBP4, SFPQ, SMARCA1, SMARCA2, TOP1, USP7 and XRCC5. Phosphorylated in a cell cycle-dependent manner at Ser-158 by cyclin A-CDK2 in response to DNA damage. Phosphorylation at this site promotes the intramolecular interaction of the N-terminal domain with the helicase ATP-binding domain, thereby probably releasing the inhibitory effect of the N-terminal domain on its ATPase activity. Phosphorylation is essential for its chromatin remodeling activity. In terms of processing, ubiquitinated at the C-terminus. Ubiquitination by the CSA complex leads to ERCC6 proteasomal degradation in a UV-dependent manner. Stabilized following interaction with KIAA1530/UVSSA, which promotes recruitment of deubiquitinating enzyme USP7, leading to deubiquitination of ERCC6 thereby preventing UV-induced degradation of ERCC6 by the proteasome.

The protein localises to the nucleus. Its subcellular location is the chromosome. It carries out the reaction ATP + H2O = ADP + phosphate + H(+). Essential factor involved in transcription-coupled nucleotide excision repair (TC-NER), a process during which RNA polymerase II-blocking lesions are rapidly removed from the transcribed strand of active genes. Plays a central role in the initiation of the TC-NER process: specifically recognizes and binds RNA polymerase II stalled at a lesion, and mediates recruitment of ERCC8/CSA, initiating DNA damage excision by TFIIH recruitment. Upon DNA-binding, it locally modifies DNA conformation by wrapping the DNA around itself, thereby modifying the interface between stalled RNA polymerase II and DNA. Acts as a chromatin remodeler at DSBs; DNA-dependent ATPase-dependent activity is essential for this function. Plays an important role in regulating the choice of the DNA double-strand breaks (DSBs) repair pathway and G2/M checkpoint activation; DNA-dependent ATPase activity is essential for this function. Regulates the DNA repair pathway choice by inhibiting non-homologous end joining (NHEJ), thereby promoting the homologous recombination (HR)-mediated repair of DSBs during the S/G2 phases of the cell cycle. Mediates the activation of the ATM- and CHEK2-dependent DNA damage responses thus preventing premature entry of cells into mitosis following the induction of DNA DSBs. Remodels chromatin by evicting histones from chromatin flanking DSBs, limiting RIF1 accumulation at DSBs thereby promoting BRCA1-mediated HR. Required for stable recruitment of ELOA and CUL5 to DNA damage sites. Also involved in UV-induced translocation of ERCC8 to the nuclear matrix. Essential for neuronal differentiation and neuritogenesis; regulates transcription and chromatin remodeling activities required during neurogenesis. This is DNA excision repair protein ERCC-6 (Ercc6) from Mus musculus (Mouse).